The chain runs to 645 residues: Glucans biosynthesis glucosyltransferase H (645 aa).

Positions 1–13 are enriched in polar residues; it reads MDGTVTPSPTTTA. The tract at residues 1-32 is disordered; that stretch reads MDGTVTPSPTTTAMPPVSALDAGTPTLPPEAP. 7 helical membrane passes run 64–84, 98–118, 423–443, 465–485, 504–524, 559–579, and 580–600; these read LIGG…SVLW, LFVL…AGFV, APMW…GGGI, AIWI…LGYI, AVSI…VMYL, YGGL…VSPA, and LAAW…VVAL.

This sequence belongs to the glycosyltransferase 2 family. OpgH subfamily.

The protein localises to the cell inner membrane. Its pathway is glycan metabolism; osmoregulated periplasmic glucan (OPG) biosynthesis. Involved in the biosynthesis of osmoregulated periplasmic glucans (OPGs). The protein is Glucans biosynthesis glucosyltransferase H of Xanthomonas euvesicatoria pv. vesicatoria (strain 85-10) (Xanthomonas campestris pv. vesicatoria).